The sequence spans 497 residues: MAESIEWVEKYRPQSLTDIVGNKKSVVDMREWAQSWLSGTPEKRAIILHGPAGVGKTSAAHALARDLDWETIELNASDQRTAGVIERVAGSASKMSSLTGTTAKRLIILDEADNIHGNADRGGARAIGGIIKNTDQPIVLIANDLYGLTPSVRSLCIELKFNSVQGRSMIPAMKRICVEEKIMCGVGVLEKLAESAGGDLRSAIKDLQAVATGRDEIHIEDIATSERDTKESIFKVLGKIFKSTDPKKALEATYGLDETPENLIHWIDENLPLQYGTEEGTQEDLITGYEYLAKADRYLGRVRKRQSYRLWRYAGALMTCGTVVSKTHVGRGFTKYQPPSFWRKMGQLRAKRDMRDNIASKIADHANKSMRYSRTDLAHLYGRMLEENEYAADVTFDLELSIDEMVYLTGKKKVTKDIQRIHDLAQAKRRSLGRDEGKAFFEKKPKKQTPDKKQMDLTQIINSTPQEDKVEKKETENVPPVKKSASKAKPQKTLFDF.

Residue G50 to T57 coordinates ATP. Positions K428–M455 are enriched in basic and acidic residues. The interval K428–F497 is disordered. A compositionally biased stretch (polar residues) spans D456–P465. A compositionally biased stretch (basic and acidic residues) spans Q466 to E476.

This sequence belongs to the activator 1 small subunits family. RfcL subfamily. Heteromultimer composed of small subunits (RfcS) and large subunits (RfcL).

Functionally, part of the RFC clamp loader complex which loads the PCNA sliding clamp onto DNA. This Methanococcoides burtonii (strain DSM 6242 / NBRC 107633 / OCM 468 / ACE-M) protein is Replication factor C large subunit.